Here is a 106-residue protein sequence, read N- to C-terminus: MIITTTEQVPGYRVKEILGVVSGNVVMSKHLGRDIAAAFKTLAGGEIKGYTEMLTEARNIALERMMKEAEKLGADAVIGFRYSSSTIMSGAAEILAYGTAVKLEKI.

This sequence belongs to the UPF0145 family.

This is UPF0145 protein TM_0763 from Thermotoga maritima (strain ATCC 43589 / DSM 3109 / JCM 10099 / NBRC 100826 / MSB8).